The following is a 377-amino-acid chain: Protein ECM9 (377 aa).

Functionally, may be involved in cell wall organization and biogenesis. The protein is Protein ECM9 (ECM9) of Saccharomyces cerevisiae (strain ATCC 204508 / S288c) (Baker's yeast).